The sequence spans 657 residues: Iron-sulfur cluster biogenesis chaperone, mitochondrial (657 aa).

This sequence belongs to the heat shock protein 70 family. As to quaternary structure, interacts with the Fe/S cluster assembly proteins ISU1, MGE1, GRX5 and JAC1.

It localises to the mitochondrion matrix. The enzyme catalyses ATP + H2O = ADP + phosphate + H(+). Its function is as follows. Required for the assembly of iron-sulfur (Fe/S) clusters in mitochondria. Assisted by the DnaJ-like co-chaperone JAC1 and the nucleotide exchange factor MGE1, it mediates ATP-dependent Fe-S cluster transfer from the scaffold proteins ISU1/ISU2 to GRX5. The sequence is that of Iron-sulfur cluster biogenesis chaperone, mitochondrial from Saccharomyces cerevisiae (strain ATCC 204508 / S288c) (Baker's yeast).